The chain runs to 431 residues: Mevalonate kinase (431 aa).

ATP-binding positions include Lys13, Ser139, and 144–150 (GAGLGSS). Residues Ser150 and Glu198 each coordinate Mg(2+). Asp209 (proton acceptor) is an active-site residue.

It belongs to the GHMP kinase family. Mevalonate kinase subfamily. As to quaternary structure, homodimer.

It is found in the cytoplasm. Its subcellular location is the cytosol. It carries out the reaction (R)-mevalonate + ATP = (R)-5-phosphomevalonate + ADP + H(+). Its pathway is isoprenoid biosynthesis; isopentenyl diphosphate biosynthesis via mevalonate pathway; isopentenyl diphosphate from (R)-mevalonate: step 1/3. In terms of biological role, mevalonate kinase; part of the second module of ergosterol biosynthesis pathway that includes the middle steps of the pathway. ERG12 converts mevalonate into 5-phosphomevalonate. The second module is carried out in the vacuole and involves the formation of farnesyl diphosphate, which is also an important intermediate in the biosynthesis of ubiquinone, dolichol, heme and prenylated proteins. Activity by the mevalonate kinase ERG12 first converts mevalonate into 5-phosphomevalonate. 5-phosphomevalonate is then further converted to 5-diphosphomevalonate by the phosphomevalonate kinase ERG8. The diphosphomevalonate decarboxylase MVD then produces isopentenyl diphosphate. The isopentenyl-diphosphate delta-isomerase IDI1 then catalyzes the 1,3-allylic rearrangement of the homoallylic substrate isopentenyl (IPP) to its highly electrophilic allylic isomer, dimethylallyl diphosphate (DMAPP). Finally the farnesyl diphosphate synthase ERG20 catalyzes the sequential condensation of isopentenyl pyrophosphate with dimethylallyl pyrophosphate, and then with the resultant geranylpyrophosphate to the ultimate product farnesyl pyrophosphate. This chain is Mevalonate kinase, found in Candida albicans (strain SC5314 / ATCC MYA-2876) (Yeast).